We begin with the raw amino-acid sequence, 111 residues long: MDSVLIHVLIDGLVACVAQLIRIADELLQFILQVQEVPYVEENGRAEETEADAPLPEEPSLPDLPDLSDLDSILTPREDEDLIFDIDQAMLDMDNLYEDTVSGINDDLTGD.

The disordered stretch occupies residues 43–72 (NGRAEETEADAPLPEEPSLPDLPDLSDLDS). Residues 61 to 72 (LPDLPDLSDLDS) show a composition bias toward low complexity.

This is an uncharacterized protein from Homo sapiens (Human).